The following is a 438-amino-acid chain: Coenzyme A disulfide reductase (438 aa).

8–33 (GAVAGGATCASQIRRLDKESDIIIFE) is an FAD binding site. Substrate-binding residues include Thr-15, Gln-19, Arg-22, Ser-39, and Asn-42. The active-site Nucleophile is Cys-43. The active-site Redox-active is the Cys-43. Lys-71 serves as a coordination point for substrate. 151–166 (VLVVGAGYVSLEVLEN) lines the NADP(+) pocket. 267 to 277 (TNVPNIYAIGD) contributes to the FAD binding site. His-299 is a binding site for substrate. Tyr-419 provides a ligand contact to FAD. Lys-427 contributes to the substrate binding site.

The protein belongs to the class-III pyridine nucleotide-disulfide oxidoreductase family. Homodimer. FAD serves as cofactor.

It catalyses the reaction NADP(+) + 2 CoA = CoA-disulfide + NADPH + H(+). In terms of biological role, catalyzes specifically the NADPH-dependent reduction of coenzyme A disulfide. The chain is Coenzyme A disulfide reductase from Staphylococcus aureus (strain USA300).